The sequence spans 118 residues: MARVVALVLLGLLSLTGLEAVQRIPKVQVYSRHPAENGKPNFLNCYVSGFHPPEIEIDLLKNGEKMKVDRSDLSFSKDWSFYLLVHTDFTPNGVDEYSCRVQHSTLKEPLIVKWDRDL.

An N-terminal signal peptide occupies residues 1–20; it reads MARVVALVLLGLLSLTGLEA. Residues 25–111 form the Ig-like C1-type domain; sequence PKVQVYSRHP…QHSTLKEPLI (87 aa). Cysteines 45 and 99 form a disulfide.

It belongs to the beta-2-microglobulin family. In terms of assembly, heterodimer of an alpha chain and a beta chain. Beta-2-microglobulin is the beta-chain of major histocompatibility complex class I molecules.

It localises to the secreted. Its function is as follows. Component of the class I major histocompatibility complex (MHC). Involved in the presentation of peptide antigens to the immune system. In Equus asinus (Donkey), this protein is Beta-2-microglobulin (B2M).